Consider the following 193-residue polypeptide: Dirigent protein (193 aa).

The N-terminal stretch at 1 to 29 (MGGEKAFSFIFLLFLCFFLANLSASSAHP) is a signal peptide. The cysteines at positions 40 and 192 are disulfide-linked. N-linked (GlcNAc...) asparagine glycans are attached at residues Asn-59 and Asn-129.

It belongs to the plant dirigent protein family. In terms of assembly, homodimer. Expressed in rhizomes, stems, and leaves.

Its subcellular location is the secreted. It localises to the extracellular space. The protein resides in the apoplast. It functions in the pathway aromatic compound metabolism; phenylpropanoid biosynthesis. In terms of biological role, dirigent proteins impart stereoselectivity on the phenoxy radical-coupling reaction, yielding optically active lignans from two molecules of coniferyl alcohol in the biosynthesis of lignans, flavonolignans, and alkaloids and thus plays a central role in plant secondary metabolism. Also involved in the biosynthesis of etoposide, a chemotherapeutic compound of the topoisomerase inhibitor family. The chain is Dirigent protein from Sinopodophyllum hexandrum (Himalayan may apple).